We begin with the raw amino-acid sequence, 117 residues long: Ubiquitin-like protein 3 (117 aa).

One can recognise a Ubiquitin-like domain in the interval 10-88 (INLRLILVSG…PFGKTTVMHL (79 aa)). Cysteine 113 carries S-palmitoyl cysteine lipidation. Cysteine 114 carries the post-translational modification Cysteine methyl ester. Cysteine 114 carries S-geranylgeranyl cysteine lipidation. A propeptide spans 115-117 (VIL) (removed in mature form).

It is found in the cell membrane. The chain is Ubiquitin-like protein 3 (UBL3) from Bos taurus (Bovine).